The chain runs to 223 residues: UPF0319 protein VPA1584 (223 aa).

An N-terminal signal peptide occupies residues Met1–Ala21.

It belongs to the UPF0319 family.

This Vibrio parahaemolyticus serotype O3:K6 (strain RIMD 2210633) protein is UPF0319 protein VPA1584.